The sequence spans 113 residues: Hydrogenase maturation factor HypA (113 aa).

Residue histidine 2 coordinates Ni(2+). The Zn(2+) site is built by cysteine 73, cysteine 76, cysteine 89, and cysteine 92.

This sequence belongs to the HypA/HybF family.

In terms of biological role, involved in the maturation of [NiFe] hydrogenases. Required for nickel insertion into the metal center of the hydrogenase. The polypeptide is Hydrogenase maturation factor HypA (Aeromonas salmonicida (strain A449)).